The primary structure comprises 325 residues: 6-hydroxymellein 5-farnesyltransferase cdmH (325 aa).

The next 5 helical transmembrane spans lie at 60 to 80 (ASIL…GAAG), 113 to 133 (AFTW…AMLG), 138 to 158 (WPFM…KRPI), 169 to 189 (LLGI…YGPC), and 192 to 212 (ISEI…WSFY). Asn214 carries N-linked (GlcNAc...) asparagine glycosylation. The next 3 helical transmembrane spans lie at 243–263 (ALLA…LRPF), 267–287 (WLWL…LLSF), and 295–315 (GGVL…ACTL).

Belongs to the UbiA prenyltransferase family. It depends on Mg(2+) as a cofactor.

It is found in the membrane. The catalysed reaction is 6-hydroxymellein + (2E,6E)-farnesyl diphosphate = verruculide C + diphosphate. It functions in the pathway secondary metabolite biosynthesis; terpenoid biosynthesis. In terms of biological role, 6-hydroxymellein 5-farnesyltransferase; part of the gene cluster that mediates the biosynthesis of chrodrimanin B, a meroterpenoid that acts as a potent blocker of insect GABA-gated chloride channels. The first step of the pathway is the biosynthesis of 6-hydroxymellein by the polyketide synthase cdmE. The prenyltransferase cdmH acts as a 6-hydroxymellein 5-farnesyltransferase and produces the hydrophobic metabolite verruculide C. The FAD-dependent monooxygenase cdmI further converts verruculide C into verruculide B. The terpene cyclase cdmG then produced the pentacyclic molecule 3-hydroxypentacecilide A, the backbone structure of chrodrimanin B, via folding the farnesyl moiety of the substrate into the chair-boat conformation. The short-chain dehydrogenase/reductase cdmF functions as the 3-OH dehydrogenase that oxidizes the C-3 hydroxyl group of 3-hydroxypentacecilide A and produces chrodrimanin C, the dehydrogenated product of 3-hydroxypentacecilide A. The cytochrome P450 monooxygenase cdmJ then accepts both 3-hydroxypentacecilide A and chrodrimanin C and functions as a C-7-beta-hydroxylase to produce respectively chrodrimanin H and chrodrimanin F. The dioxygenase cdmA accepts chrodrimanin H to afford chrodrimanin E, which is further transformed to chrodrimanin A by the dioxygenase cdmD. CdmA can also accept chrodrimanin C as substrate to convert it into verruculide A, which is further converted into chrodrimanin T by cdmD. The last step of the biosynthesis is proposed to be performed by the acetyltransferase cdmC which acetylates chrodrimanin A to yield chrodrimanin B. The pathway may also lead to the production of additional shunt products, including chrodrimanins T and U. The sequence is that of 6-hydroxymellein 5-farnesyltransferase cdmH from Talaromyces verruculosus (Penicillium verruculosum).